The following is a 172-amino-acid chain: MSRLNEYQVIGRNLPTESVPEPKLFRMRIFAPNTVVAKSRYWYFLQKLHKVKKASGEIVSVNIISEAKPTKVKTFGIWLRYESRSGIHNMYKEYRDVTRVGAVETMYQDLAARHRARFRSIHILKVVELEKTDDVKRQYVKQFLTKDLKFPLPHRVQKSKKLFQATAPTTFY.

The protein belongs to the eukaryotic ribosomal protein eL20 family. As to quaternary structure, component of the large ribosomal subunit. Mature ribosomes consist of a small (40S) and a large (60S) subunit. The 40S subunit contains about 32 different proteins and 1 molecule of RNA (18S). The 60S subunit contains 45 different proteins and 3 molecules of RNA (25S, 5.8S and 5S).

The protein localises to the cytoplasm. Functionally, component of the ribosome, a large ribonucleoprotein complex responsible for the synthesis of proteins in the cell. The small ribosomal subunit (SSU) binds messenger RNAs (mRNAs) and translates the encoded message by selecting cognate aminoacyl-transfer RNA (tRNA) molecules. The large subunit (LSU) contains the ribosomal catalytic site termed the peptidyl transferase center (PTC), which catalyzes the formation of peptide bonds, thereby polymerizing the amino acids delivered by tRNAs into a polypeptide chain. The nascent polypeptides leave the ribosome through a tunnel in the LSU and interact with protein factors that function in enzymatic processing, targeting, and the membrane insertion of nascent chains at the exit of the ribosomal tunnel. The protein is Large ribosomal subunit protein eL20 of Candida albicans (strain SC5314 / ATCC MYA-2876) (Yeast).